A 330-amino-acid chain; its full sequence is Anthranilate phosphoribosyltransferase (330 aa).

5-phospho-alpha-D-ribose 1-diphosphate is bound by residues Gly75, Gly78–Asp79, Thr83, Asn85–Thr88, Lys103–Ser111, and Ala115. Gly75 is a binding site for anthranilate. Ser87 lines the Mg(2+) pocket. Residue Asn106 coordinates anthranilate. Anthranilate is bound at residue Arg161. Positions 220 and 221 each coordinate Mg(2+).

This sequence belongs to the anthranilate phosphoribosyltransferase family. As to quaternary structure, homodimer. It depends on Mg(2+) as a cofactor.

It carries out the reaction N-(5-phospho-beta-D-ribosyl)anthranilate + diphosphate = 5-phospho-alpha-D-ribose 1-diphosphate + anthranilate. It participates in amino-acid biosynthesis; L-tryptophan biosynthesis; L-tryptophan from chorismate: step 2/5. Functionally, catalyzes the transfer of the phosphoribosyl group of 5-phosphorylribose-1-pyrophosphate (PRPP) to anthranilate to yield N-(5'-phosphoribosyl)-anthranilate (PRA). The protein is Anthranilate phosphoribosyltransferase of Erythrobacter litoralis (strain HTCC2594).